A 445-amino-acid chain; its full sequence is UPF0210 protein SPJ_0248 (445 aa).

The protein belongs to the UPF0210 family. As to quaternary structure, homodimer.

This chain is UPF0210 protein SPJ_0248, found in Streptococcus pneumoniae (strain JJA).